The primary structure comprises 319 residues: Acetyl-coenzyme A carboxylase carboxyl transferase subunit alpha (319 aa).

Positions 39-293 (KLEQKAAQLL…GDAIAEELKG (255 aa)) constitute a CoA carboxyltransferase C-terminal domain.

It belongs to the AccA family. Acetyl-CoA carboxylase is a heterohexamer composed of biotin carboxyl carrier protein (AccB), biotin carboxylase (AccC) and two subunits each of ACCase subunit alpha (AccA) and ACCase subunit beta (AccD).

It localises to the cytoplasm. The enzyme catalyses N(6)-carboxybiotinyl-L-lysyl-[protein] + acetyl-CoA = N(6)-biotinyl-L-lysyl-[protein] + malonyl-CoA. It participates in lipid metabolism; malonyl-CoA biosynthesis; malonyl-CoA from acetyl-CoA: step 1/1. Functionally, component of the acetyl coenzyme A carboxylase (ACC) complex. First, biotin carboxylase catalyzes the carboxylation of biotin on its carrier protein (BCCP) and then the CO(2) group is transferred by the carboxyltransferase to acetyl-CoA to form malonyl-CoA. The chain is Acetyl-coenzyme A carboxylase carboxyl transferase subunit alpha from Parvibaculum lavamentivorans (strain DS-1 / DSM 13023 / NCIMB 13966).